The chain runs to 123 residues: Putative EG45-like domain containing protein 1 (123 aa).

The N-terminal stretch at Met-1–Ala-21 is a signal peptide. Positions Gly-24–Pro-123 constitute an Expansin-like EG45 domain.

Its subcellular location is the secreted. Might have a systemic role in water and solute homeostasis. In Arabidopsis thaliana (Mouse-ear cress), this protein is Putative EG45-like domain containing protein 1 (EGC1).